Consider the following 199-residue polypeptide: Recombination protein RecR (199 aa).

Residues 57-72 (CQSCRTFTEQSLCPIC) form a C4-type zinc finger. Residues 81-176 (GVICVVETPA…IISRIAHGVP (96 aa)) enclose the Toprim domain.

This sequence belongs to the RecR family.

Its function is as follows. May play a role in DNA repair. It seems to be involved in an RecBC-independent recombinational process of DNA repair. It may act with RecF and RecO. In Shewanella denitrificans (strain OS217 / ATCC BAA-1090 / DSM 15013), this protein is Recombination protein RecR.